A 319-amino-acid polypeptide reads, in one-letter code: D-alanine--D-alanine ligase B (319 aa).

One can recognise an ATP-grasp domain in the interval 117–312; it reads KRVWLSLGLP…FQQLVLAILA (196 aa). ATP is bound at residue 143 to 198; sequence AQRLGFPLIVKPAHEGSSIGMAKVGGLDELIAAWREAARYDSQVLVEQWISGPEFT. Mg(2+)-binding residues include aspartate 266, glutamate 279, and asparagine 281.

Belongs to the D-alanine--D-alanine ligase family. Mg(2+) serves as cofactor. Requires Mn(2+) as cofactor.

It localises to the cytoplasm. It carries out the reaction 2 D-alanine + ATP = D-alanyl-D-alanine + ADP + phosphate + H(+). It functions in the pathway cell wall biogenesis; peptidoglycan biosynthesis. Cell wall formation. The sequence is that of D-alanine--D-alanine ligase B from Pseudomonas aeruginosa (strain ATCC 15692 / DSM 22644 / CIP 104116 / JCM 14847 / LMG 12228 / 1C / PRS 101 / PAO1).